Reading from the N-terminus, the 121-residue chain is Large ribosomal subunit protein bL12 (121 aa).

The protein belongs to the bacterial ribosomal protein bL12 family. As to quaternary structure, homodimer. Part of the ribosomal stalk of the 50S ribosomal subunit. Forms a multimeric L10(L12)X complex, where L10 forms an elongated spine to which 2 to 4 L12 dimers bind in a sequential fashion. Binds GTP-bound translation factors.

Its function is as follows. Forms part of the ribosomal stalk which helps the ribosome interact with GTP-bound translation factors. Is thus essential for accurate translation. The protein is Large ribosomal subunit protein bL12 of Pectobacterium atrosepticum (strain SCRI 1043 / ATCC BAA-672) (Erwinia carotovora subsp. atroseptica).